The primary structure comprises 256 residues: Hemin import ATP-binding protein HmuV (256 aa).

The 237-residue stretch at 2–238 (ISAQNLVYSL…QALTMLYGAD (237 aa)) folds into the ABC transporter domain. Position 34-41 (34-41 (GPNGAGKS)) interacts with ATP.

It belongs to the ABC transporter superfamily. Heme (hemin) importer (TC 3.A.1.14.5) family. In terms of assembly, the complex is composed of two ATP-binding proteins (HmuV), two transmembrane proteins (HmuU) and a solute-binding protein (HmuT).

It is found in the cell inner membrane. Its function is as follows. Part of the ABC transporter complex HmuTUV involved in hemin import. Responsible for energy coupling to the transport system. The protein is Hemin import ATP-binding protein HmuV of Shigella dysenteriae serotype 1 (strain Sd197).